The following is a 981-amino-acid chain: Isoleucine--tRNA ligase (981 aa).

Residues 50–60 (PTTNGMPHVGH) carry the 'HIGH' region motif. The 'KMSKS' region signature appears at 604–608 (KMSKS). K607 is an ATP binding site.

The protein belongs to the class-I aminoacyl-tRNA synthetase family. IleS type 2 subfamily. Monomer. The cofactor is Zn(2+).

Its subcellular location is the cytoplasm. It carries out the reaction tRNA(Ile) + L-isoleucine + ATP = L-isoleucyl-tRNA(Ile) + AMP + diphosphate. Catalyzes the attachment of isoleucine to tRNA(Ile). As IleRS can inadvertently accommodate and process structurally similar amino acids such as valine, to avoid such errors it has two additional distinct tRNA(Ile)-dependent editing activities. One activity is designated as 'pretransfer' editing and involves the hydrolysis of activated Val-AMP. The other activity is designated 'posttransfer' editing and involves deacylation of mischarged Val-tRNA(Ile). The sequence is that of Isoleucine--tRNA ligase from Pyrobaculum aerophilum (strain ATCC 51768 / DSM 7523 / JCM 9630 / CIP 104966 / NBRC 100827 / IM2).